Here is a 509-residue protein sequence, read N- to C-terminus: 2,3-bisphosphoglycerate-independent phosphoglycerate mutase (509 aa).

Residue Asp-11 participates in Mn(2+) binding. Tyr-35 carries the phosphotyrosine modification. Ser-61 serves as a coordination point for Mn(2+). Residue Ser-61 is the Phosphoserine intermediate of the active site. Substrate-binding positions include His-122, Arg-152 to Asp-153, Arg-184, Arg-190, Arg-260 to Arg-263, and Lys-335. Mn(2+) is bound by residues Asp-402, His-406, Asp-443, His-444, and His-461.

The protein belongs to the BPG-independent phosphoglycerate mutase family. As to quaternary structure, monomer. It depends on Mn(2+) as a cofactor.

The catalysed reaction is (2R)-2-phosphoglycerate = (2R)-3-phosphoglycerate. It participates in carbohydrate degradation; glycolysis; pyruvate from D-glyceraldehyde 3-phosphate: step 3/5. Functionally, essential for rapid growth and for sporulation. Catalyzes the interconversion of 2-phosphoglycerate and 3-phosphoglycerate. This Bacillus anthracis protein is 2,3-bisphosphoglycerate-independent phosphoglycerate mutase.